The primary structure comprises 394 residues: Elongation factor Tu 1 (394 aa).

Residues 10-204 (KPHVNVGTIG…YLDSYIPEPE (195 aa)) enclose the tr-type G domain. The segment at 19–26 (GHVDHGKT) is G1. Residue 19-26 (GHVDHGKT) coordinates GTP. Threonine 26 is a Mg(2+) binding site. A G2 region spans residues 60 to 64 (GITIN). The segment at 81–84 (DCPG) is G3. GTP is bound by residues 81–85 (DCPGH) and 136–139 (NKCD). Residues 136–139 (NKCD) form a G4 region. Residues 174–176 (SAL) form a G5 region.

This sequence belongs to the TRAFAC class translation factor GTPase superfamily. Classic translation factor GTPase family. EF-Tu/EF-1A subfamily. Monomer.

The protein resides in the cytoplasm. The catalysed reaction is GTP + H2O = GDP + phosphate + H(+). Functionally, GTP hydrolase that promotes the GTP-dependent binding of aminoacyl-tRNA to the A-site of ribosomes during protein biosynthesis. The chain is Elongation factor Tu 1 from Yersinia enterocolitica serotype O:8 / biotype 1B (strain NCTC 13174 / 8081).